Consider the following 382-residue polypeptide: Galactokinase (382 aa).

Substrate is bound at residue 34 to 37; it reads EHTD. 124-130 is a binding site for ATP; sequence GAGLSSS. Residues Ser130 and Glu162 each coordinate Mg(2+). The Proton acceptor role is filled by Asp174. Substrate is bound at residue Tyr223.

Belongs to the GHMP kinase family. GalK subfamily.

It is found in the cytoplasm. The catalysed reaction is alpha-D-galactose + ATP = alpha-D-galactose 1-phosphate + ADP + H(+). The protein operates within carbohydrate metabolism; galactose metabolism. Functionally, catalyzes the transfer of the gamma-phosphate of ATP to D-galactose to form alpha-D-galactose-1-phosphate (Gal-1-P). The chain is Galactokinase from Shigella flexneri.